The following is a 489-amino-acid chain: Major aspartyl peptidase 1 (489 aa).

Positions 1-16 (MHYLAVALPLLTLALA) are cleaved as a signal peptide. The Peptidase A1 domain maps to 101–432 (YAGQVSIGTP…RYNPAAIGFA (332 aa)). Aspartate 119 is a catalytic residue. Residue glycine 121 coordinates pepstatin A. Residues cysteine 132 and cysteine 137 are joined by a disulfide bond. Residues threonine 161, glycine 163, and serine 164 each coordinate pepstatin A. Residue asparagine 266 is glycosylated (N-linked (GlcNAc...) asparagine). Tyrosine 286 contributes to the pepstatin A binding site. Residue aspartate 317 is part of the active site. Residues threonine 320 and threonine 321 each coordinate pepstatin A. Cysteine 357 and cysteine 391 are oxidised to a cystine. The segment at 442 to 466 (AGNPSSSTTGGGTSGSNGGGSSSGA) is disordered. Gly residues predominate over residues 450 to 463 (TGGGTSGSNGGGSS). A propeptide spans 456 to 489 (GSNGGGSSSGAMERKGVQLGWLVGAVAVGVAAMI) (removed at pH 5.0; by autocatalysis).

It belongs to the peptidase A1 family. In terms of assembly, monomer. Post-translationally, activated by the autocatalytic cleavage of the propeptide. Cleaved at the end of the propeptide promiscuously from residue 76 to residue 79. C-terminal cleavage by autocatalysis at Gly-456 at the pH optimum indicating a possible regulatory or other function of this propeptide.

It localises to the secreted. With respect to regulation, activated by low pH. Inhibited by pepstatin A with an IC(50) of 1.4 nM. Inhibited by acetyl pepstatin. Inhibited by HIV antiretroviral therapy protease inhibitors including amprenavir and ritonavir. Inhibited by HIV-1 protease inhibitor brecanavir with an approximate IC(50) of 352 nM. Inhibited by HIV-1 protease inhibitors CGP53437 and GS-8374. From the tested peptidomimetic inhibitor molecules, macrocycles containing P2-P3' tethered side chains, statines in P1 and an alpha amino acid in P2' are the best. From the linear peptidomimetic inhibitors, the ones with a phenylstatine or hydroxyethylamine scissile bond isoster are better than compounds with a reduced bond or a homo-amide. Overall, inhibitors with a phenylalanine side chain, either unsubstituted or with a small substituent, is preferred in P1 while a bulkier P1 side chain leads to lower inhibition. Possesses prevalent extracellular endopeptidase activity at low pH condition. Required for high-density growth in acidic environments. Broad substrate specificity with preference cleavage of the peptide substrate between hydrophobic amino acids. Cleaves substrate at P1-P1' between Phe-Leu. Positively charged amino acids are preferred at P2. Prefers hydrophobic amino acids at the P3 and P4 positions. Cleaves substrate also at P1'-P2' between Leu-Val to some degree. Required for virulence in mouse inhalation model of infection. This chain is Major aspartyl peptidase 1, found in Cryptococcus neoformans var. grubii serotype A (strain H99 / ATCC 208821 / CBS 10515 / FGSC 9487) (Filobasidiella neoformans var. grubii).